The sequence spans 856 residues: Protein translocase subunit SecA (856 aa).

Residues Q77, 95–99 (GEGKT), and D534 each bind ATP.

This sequence belongs to the SecA family. Monomer and homodimer. Part of the essential Sec protein translocation apparatus which comprises SecA, SecYEG and auxiliary proteins SecDF. Other proteins may also be involved.

The protein resides in the cell inner membrane. It localises to the cytoplasm. It carries out the reaction ATP + H2O + cellular proteinSide 1 = ADP + phosphate + cellular proteinSide 2.. In terms of biological role, part of the Sec protein translocase complex. Interacts with the SecYEG preprotein conducting channel. Has a central role in coupling the hydrolysis of ATP to the transfer of proteins into and across the cell membrane, serving as an ATP-driven molecular motor driving the stepwise translocation of polypeptide chains across the membrane. The polypeptide is Protein translocase subunit SecA (Thermosipho africanus (strain TCF52B)).